We begin with the raw amino-acid sequence, 437 residues long: CMP-5'-(3-aminopropyl)phosphonate hydroxylase (437 aa).

FAD is required as a cofactor.

The catalysed reaction is CMP-5'-(3-aminopropyl)phosphonate + NADPH + O2 = CMP-5'-(N-hydroxy-3-aminopropyl)phosphonate + NADP(+) + H2O. The protein operates within antibiotic biosynthesis. Its function is as follows. Hydroxylase involved in the biosynthesis of the phosphonate antibiotic FR-900098, a potent antimalarial agent that acts as an inhibitor of 1-deoxy-D-xylulose 5-phosphate reductoisomerase (DXR), the first enzyme in the nonmevalonate pathway for isoprenoid biosynthesis. Catalyzes the N-hydroxylation of CMP-5'-3-aminopropylphosphonate (CMP-5'-3APn) to CMP-5'-(N-hydroxy-3-aminopropyl)phosphonate (CMP-5'-H3APn). Cannot use CMP-5'-N-acetyl-3-aminopropylphosphonate (CMP-5'-Ac3APn) as a substrate. This is CMP-5'-(3-aminopropyl)phosphonate hydroxylase from Streptomyces rubellomurinus (strain ATCC 31215).